We begin with the raw amino-acid sequence, 298 residues long: MFKSSKKEDSSKKNHNNKLIFAIRKLFSPIKNFFRQTKTPDNFFGVIKRLKINNQKMTLDECNIFANLLKIKDKTIADIMVPRSDIAAIKLTTNLEELSESIKLKVLHARTLIYDGTLDNVVGFIHIKDLFKAFATKQNGCLKKLIRKHIIAAPSMKLLDLLTKMRRERTHIAIVVDEYGGTDGLVTIEDLIEEIVGRIDDEHDQQLDSDNLKVINNSTIILNARVEVEVLEEIIGEKLKNDDEFDTIGGLVLTRVGSVPAIGTRINISENIEIEVTDATPRSLKQVKIRLKNALNSG.

2 CBS domains span residues 80–141 and 145–202; these read MVPR…QNGC and LIRK…IDDE.

This sequence belongs to the UPF0053 family. Hemolysin C subfamily.

This Rickettsia canadensis (strain McKiel) protein is Possible hemolysin C (tlyC).